Here is a 295-residue protein sequence, read N- to C-terminus: Cyclin-G1 (295 aa).

Belongs to the cyclin family. Cyclin G subfamily.

Its subcellular location is the nucleus. Functionally, may play a role in growth regulation. Is associated with G2/M phase arrest in response to DNA damage. May be an intermediate by which p53 mediates its role as an inhibitor of cellular proliferation. This Pongo abelii (Sumatran orangutan) protein is Cyclin-G1 (CCNG1).